The primary structure comprises 426 residues: 3-phosphoshikimate 1-carboxyvinyltransferase (426 aa).

The 3-phosphoshikimate site is built by Lys-22, Ser-23, and Arg-27. Lys-22 contributes to the phosphoenolpyruvate binding site. Phosphoenolpyruvate is bound by residues Gly-96 and Arg-124. 3-phosphoshikimate is bound by residues Ser-170 and Ser-171. Gln-172 is a binding site for phosphoenolpyruvate. 3-phosphoshikimate contacts are provided by Ser-198, Asp-314, Asn-337, and Lys-341. The Proton acceptor role is filled by Asp-314. Arg-345, Arg-387, and Lys-412 together coordinate phosphoenolpyruvate.

The protein belongs to the EPSP synthase family. Homotetramer.

It is found in the cytoplasm. The catalysed reaction is 3-phosphoshikimate + phosphoenolpyruvate = 5-O-(1-carboxyvinyl)-3-phosphoshikimate + phosphate. It functions in the pathway metabolic intermediate biosynthesis; chorismate biosynthesis; chorismate from D-erythrose 4-phosphate and phosphoenolpyruvate: step 6/7. Functionally, catalyzes the transfer of the enolpyruvyl moiety of phosphoenolpyruvate (PEP) to the 5-hydroxyl of shikimate-3-phosphate (S3P) to produce enolpyruvyl shikimate-3-phosphate and inorganic phosphate. The polypeptide is 3-phosphoshikimate 1-carboxyvinyltransferase (Vibrio cholerae serotype O1 (strain ATCC 39315 / El Tor Inaba N16961)).